A 557-amino-acid polypeptide reads, in one-letter code: Aerobic glycerol-3-phosphate dehydrogenase (557 aa).

21–49 (DLVIIGGGITGAGIALDASERGMKVALVE) contributes to the FAD binding site.

Belongs to the FAD-dependent glycerol-3-phosphate dehydrogenase family. It depends on FAD as a cofactor.

Its subcellular location is the cytoplasm. It catalyses the reaction a quinone + sn-glycerol 3-phosphate = dihydroxyacetone phosphate + a quinol. It participates in polyol metabolism; glycerol degradation via glycerol kinase pathway; glycerone phosphate from sn-glycerol 3-phosphate (aerobic route): step 1/1. The sequence is that of Aerobic glycerol-3-phosphate dehydrogenase (glpD) from Staphylococcus aureus (strain USA300).